A 461-amino-acid polypeptide reads, in one-letter code: SWM histone demethylase complex subunit phf1 (461 aa).

The interval 79 to 130 (PYGGMTMPASSSSGATSVPPEQDPSLSVSFNRLPKSASTKTKNGRIRSSRRE) is disordered. Polar residues predominate over residues 102–119 (PSLSVSFNRLPKSASTKT). The PHD-type zinc-finger motif lies at 190–246 (VTLCSVCQRGHSPLSNRIVFCDGCNSPYHQLCHHPPIDDATVQDVDAEWFCMKCQYR).

In terms of assembly, component of the SWM histone demethylase complex composed of at least lsd1, lsd2, phf1 and phf2.

Its subcellular location is the nucleus. Functionally, component of the SWM histone demethylase complex that specifically demethylates H3K9me2, a specific tag for epigenetic transcriptional activation, thereby acting as a corepressor. Has a role in regulating heterochromatin propagation and euchromatic transcription. The sequence is that of SWM histone demethylase complex subunit phf1 (phf1) from Schizosaccharomyces pombe (strain 972 / ATCC 24843) (Fission yeast).